Consider the following 207-residue polypeptide: Alpha-1-acid glycoprotein 2 (207 aa).

A signal peptide spans 1-18 (MALHMILVMVSLLPLLEA). A Pyrrolidone carboxylic acid modification is found at Gln-19. N-linked (GlcNAc...) asparagine glycosylation is found at Asn-25, Asn-34, Asn-76, Asn-94, and Asn-104. Cys-91 and Cys-184 form a disulfide bridge. Residues 188 to 207 (EKQQLELEKETKKDPEEGQA) are disordered.

Belongs to the calycin superfamily. Lipocalin family. As to expression, expressed by the liver and secreted in plasma.

The protein localises to the secreted. Functions as a transport protein in the blood stream. Binds various ligands in the interior of its beta-barrel domain. Appears to function in modulating the activity of the immune system during the acute-phase reaction. The protein is Alpha-1-acid glycoprotein 2 (Orm2) of Mus musculus (Mouse).